We begin with the raw amino-acid sequence, 370 residues long: Protein DVU_0535 (370 aa).

Topologically, residues 1–258 are cytoplasmic; the sequence is MDRRRFLTLL…EELGTKSAPE (258 aa). 3 consecutive 4Fe-4S ferredoxin-type domains span residues 40–70, 101–132, and 133–162; these read YGVLHDTTRCIGCRKCEQACNEVNKLPAPKA, DHPVFRKQQCNHCLEPACASACFVKAFTKNPD, and GSVTYDGSLCVGCRYCMVACPFNVPAFQYA. Cys-49, Cys-52, Cys-55, Cys-59, Cys-110, Cys-113, Cys-118, Cys-122, Cys-142, Cys-145, Cys-148, Cys-152, Cys-172, Cys-175, Cys-187, and Cys-191 together coordinate [4Fe-4S] cluster. Residues 259 to 284 traverse the membrane as a helical segment; sequence YTAGALGAVPMVVGIWPILLTGAYAI. Over 285-370 the chain is Periplasmic; sequence TKRKEKIAAE…DDAGKPGEDA (86 aa). The span at 345–355 shows a compositional bias: basic and acidic residues; that stretch reads FEEELAAKEQP. The disordered stretch occupies residues 345–370; that stretch reads FEEELAAKEQPEAPEGDDAGKPGEDA.

The protein localises to the cell membrane. In terms of biological role, HMWC (high-molecular-weight cytochrome c precursor), ORF2, ORF3, ORF4, ORF5, ORF6 in the HMC operon form a transmembrane protein complex that allows electron flow from the periplasmic hydrogenase to the cytoplasmic enzymes that catalyze reduction of sulfates. ORF2 is a transmembrane redox protein. The chain is Protein DVU_0535 from Nitratidesulfovibrio vulgaris (strain ATCC 29579 / DSM 644 / CCUG 34227 / NCIMB 8303 / VKM B-1760 / Hildenborough) (Desulfovibrio vulgaris).